The primary structure comprises 471 residues: Ubiquitin carboxyl-terminal hydrolase calypso (471 aa).

The region spanning 45 to 276 (GWLELESDPG…IRFNLMAVVP (232 aa)) is the UCH catalytic domain. Cys131 (nucleophile) is an active-site residue. His213 functions as the Proton donor in the catalytic mechanism. Coiled coils occupy residues 240–256 (WEDS…VMAE) and 298–324 (GTLQ…DTPT). The disordered stretch occupies residues 307 to 326 (DEQGESGNGDSQRPDTPTTL). The segment covering 314 to 326 (NGDSQRPDTPTTL) has biased composition (polar residues). The ULD domain maps to 375–403 (NYDKFICTFLSMLAHQGVLGELVSQHLLP). Positions 405–471 (KKVSGQGAAN…KGRNKCRKRK (67 aa)) are positively charged C-terminal tail required for binding nucleosomes. Residues 412–471 (AANRISKQSTTASAGGSTAAGTASTPKTQQQQAAAAKNGKSPSKTPGRRRKGRNKCRKRK) are disordered. A compositionally biased stretch (low complexity) spans 420-447 (STTASAGGSTAAGTASTPKTQQQQAAAA). Residues 457 to 471 (PGRRRKGRNKCRKRK) are compositionally biased toward basic residues.

It belongs to the peptidase C12 family. BAP1 subfamily. As to quaternary structure, catalytic component of the polycomb repressive deubiquitinase (PR-DUB) complex, at least composed of caly/calypso, Asx and sba (MBD5/6 homolog). The PR-DUB complex associates with nucleosomes to mediate deubiquitination of histone H2AK118ub1 substrates; the association requires the positively charged C-terminal tail of caly, probably due to direct binding of DNA. Interacts (via ULD domain) with Asx (via DEUBAD domain); the interaction produces a stable heterodimer with a composite binding site for ubiquitin. Homodimerizes (via coiled-coil hinge-region between the UCH and ULD domains) to mediate assembly of 2 copies of the caly-Asx heterodimer into a bisymmetric tetramer; dimerization enhances PR-DUB association with nucleosomes.

It localises to the nucleus. It carries out the reaction Thiol-dependent hydrolysis of ester, thioester, amide, peptide and isopeptide bonds formed by the C-terminal Gly of ubiquitin (a 76-residue protein attached to proteins as an intracellular targeting signal).. Its function is as follows. Catalytic component of the polycomb repressive deubiquitinase (PR-DUB) complex, a complex that specifically mediates deubiquitination of histone H2A monoubiquitinated at 'Lys-119' (H2AK118ub1). Mediates bisymmetric organization of the PR-DUB complex and is involved in association with nucleosomes to mediate deubiquitination. Does not deubiquitinate monoubiquitinated histone H2B. Required to maintain the transcriptionally repressive state of homeotic genes throughout development. The PR-DUB complex has weak or no activity toward 'Lys-48'- and 'Lys-63'-linked polyubiquitin chains. Polycomb group (PcG) protein. This is Ubiquitin carboxyl-terminal hydrolase calypso from Drosophila melanogaster (Fruit fly).